Consider the following 88-residue polypeptide: Probable oxaloacetate decarboxylase gamma chain (88 aa).

Residues 13-35 (LMFSGMGFVIIFLLILIWAIGIV) form a helical membrane-spanning segment.

Belongs to the OadG family. As to quaternary structure, heterotrimer of an alpha, a beta and a gamma subunit. Na(+) serves as cofactor.

The protein localises to the cell membrane. The catalysed reaction is oxaloacetate + 2 Na(+)(in) + H(+) = pyruvate + 2 Na(+)(out) + CO2. Functionally, catalyzes the decarboxylation of oxaloacetate coupled to Na(+) translocation. The polypeptide is Probable oxaloacetate decarboxylase gamma chain (Mannheimia succiniciproducens (strain KCTC 0769BP / MBEL55E)).